A 344-amino-acid chain; its full sequence is Probable glucan endo-1,3-beta-glucosidase At4g16260 (344 aa).

The first 21 residues, 1 to 21 (MTTLFLLIALFITTILNPTSG), serve as a signal peptide directing secretion. Catalysis depends on E116, which acts as the Proton donor. E257 acts as the Nucleophile in catalysis.

It belongs to the glycosyl hydrolase 17 family. (Microbial infection) Interacts with the 30C02 effector protein (AC G3GD54) of the beet cyst nematode Heterodera schachtii. Interaction with the 30C02 effector protein may potentially suppress beta-1,3-glucanase activity and plant defense.

It is found in the secreted. The catalysed reaction is Hydrolysis of (1-&gt;3)-beta-D-glucosidic linkages in (1-&gt;3)-beta-D-glucans.. Functionally, may be involved in plant defense against cyst nematode pathogens. The protein is Probable glucan endo-1,3-beta-glucosidase At4g16260 of Arabidopsis thaliana (Mouse-ear cress).